A 45-amino-acid polypeptide reads, in one-letter code: Phospholipase A2 3 (45 aa).

Ca(2+) contacts are provided by Tyr20, Gly24, and Gly25. A disulfide bridge connects residues Cys21 and Cys36. Residue His39 is part of the active site. Asp40 provides a ligand contact to Ca(2+).

Ca(2+) serves as cofactor. In terms of tissue distribution, expressed by the venom gland.

It localises to the secreted. The catalysed reaction is a 1,2-diacyl-sn-glycero-3-phosphocholine + H2O = a 1-acyl-sn-glycero-3-phosphocholine + a fatty acid + H(+). Functionally, PLA2 catalyzes the calcium-dependent hydrolysis of the 2-acyl groups in 3-sn-phosphoglycerides. This chain is Phospholipase A2 3, found in Bothrops diporus (Chaco lancehead).